The sequence spans 345 residues: Alpha-N-acetylneuraminide alpha-2,8-sialyltransferase (345 aa).

Residues 1–15 lie on the Cytoplasmic side of the membrane; it reads MKLQGSRMWLCPRTR. The helical; Signal-anchor for type II membrane protein transmembrane segment at 16 to 36 threads the bilayer; that stretch reads LPVGASALGFLILCWLYVFPG. Topologically, residues 37–345 are lumenal; it reads YRLPGHKEMV…KKDVSSQKPH (309 aa). Residues asparagine 59 and asparagine 107 are each glycosylated (N-linked (GlcNAc...) asparagine). Intrachain disulfides connect cysteine 126/cysteine 275 and cysteine 140/cysteine 335. 2 residues coordinate CMP-N-acetyl-beta-neuraminate: asparagine 131 and asparagine 154. Residues asparagine 154 and 176–178 contribute to the substrate site; that span reads NPS. The N-linked (GlcNAc...) asparagine glycan is linked to asparagine 233. 5 residues coordinate CMP-N-acetyl-beta-neuraminate: serine 262, threonine 263, glycine 264, tryptophan 284, and histidine 298. 262 to 264 is a substrate binding site; the sequence is STG. Histidine 310 acts as the Proton donor/acceptor in catalysis.

Belongs to the glycosyltransferase 29 family.

The protein localises to the golgi apparatus membrane. The enzyme catalyses an N-acetyl-alpha-neuraminyl-(2-&gt;3)-beta-D-galactosyl derivative + CMP-N-acetyl-beta-neuraminate = an N-acetyl-alpha-neuraminyl-(2-&gt;8)-N-acetyl-alpha-neuraminyl-(2-&gt;3)-beta-D-galactosyl derivative + CMP + H(+). The catalysed reaction is a ganglioside GM3 (d18:1(4E)) + CMP-N-acetyl-beta-neuraminate = a ganglioside GD3 (d18:1(4E)) + CMP + H(+). It catalyses the reaction a ganglioside GD3 (d18:1(4E)) + CMP-N-acetyl-beta-neuraminate = a ganglioside GT3 (d18:1(4E)) + CMP + H(+). It carries out the reaction a ganglioside GD1a (d18:1(4E)) + CMP-N-acetyl-beta-neuraminate = a ganglioside GT1a (d18:1(4E)) + CMP + H(+). The enzyme catalyses a ganglioside GT1b (d18:1(4E)) + CMP-N-acetyl-beta-neuraminate = a ganglioside GQ1b (d18:1(4E)) + CMP + H(+). The catalysed reaction is a ganglioside GM1b (d18:1(4E)) + CMP-N-acetyl-beta-neuraminate = a ganglioside GD1c (d18:1(4E)) + CMP + H(+). It catalyses the reaction a ganglioside GD3 + CMP-N-acetyl-beta-neuraminate = a ganglioside GT3 + CMP + H(+). It carries out the reaction [alpha-N-acetylneuraminyl-(2-&gt;8)](n)-alpha-N-acetylneuraminyl-(2-&gt;8)-alpha-N-acetylneuraminyl-(2-&gt;3)-beta-D-galactosyl-(1-&gt;4)-beta-D-glucosyl-(1&lt;-&gt;1)-ceramide + CMP-N-acetyl-beta-neuraminate = [alpha-N-acetylneuraminyl-(2-&gt;8)](n+1)-alpha-N-acetylneuraminyl-(2-&gt;8)-alpha-N-acetylneuraminyl-(2-&gt;3)-beta-D-galactosyl-(1-&gt;4)-beta-D-glucosyl-(1&lt;-&gt;1)-ceramide + CMP + H(+). Its pathway is protein modification; protein glycosylation. The protein operates within lipid metabolism; sphingolipid metabolism. In terms of biological role, catalyzes the addition of sialic acid in alpha 2,8-linkage to the sialic acid moiety of the ganglioside GM3 to form ganglioside GD3; gangliosides are a subfamily of complex glycosphingolipds that contain one or more residues of sialic acid. Glycosphingolipids are required for convergence extension movements during early development. Can catalyze the addition of a second alpha-2,8- sialic acid to GD3 to form GT3. Can use GM1b, GD1a and GT1b as acceptor substrates to synthesize GD1c, GT1a and GQ1b respectively. The sequence is that of Alpha-N-acetylneuraminide alpha-2,8-sialyltransferase from Xenopus tropicalis (Western clawed frog).